Consider the following 194-residue polypeptide: CASP-like protein 2C2 (194 aa).

Over 1-27 the chain is Cytoplasmic; the sequence is MAAGQPRPPPPPSSVRTERVLRAACAA. A helical transmembrane segment spans residues 28 to 48; it reads MAAAGALLLGFSAETKTVIFV. The Extracellular segment spans residues 49–58; that stretch reads QKKAVPKDVQ. A helical transmembrane segment spans residues 59-79; the sequence is ALWVLIVAAAAAAAYHAAQLA. Residues 80–113 are Cytoplasmic-facing; sequence RCLCMDRLAGGGGGCRRLRRAVACATFLLDKGCA. The helical transmembrane segment at 114–134 threads the bilayer; sequence YMVLATTVAALQACFVGLLGV. Topologically, residues 135–152 are extracellular; sequence EALQWSKLCNIYTRFCEQ. A helical membrane pass occupies residues 153-173; the sequence is AAAGMVCSLVAAAGMAVLSAF. Residues 174–194 lie on the Cytoplasmic side of the membrane; sequence SARDLFRRRRPCSPCVQVQQV.

The protein belongs to the Casparian strip membrane proteins (CASP) family. In terms of assembly, homodimer and heterodimers.

It is found in the cell membrane. This chain is CASP-like protein 2C2, found in Sorghum bicolor (Sorghum).